The following is a 913-amino-acid chain: Tyrosine-protein phosphatase non-receptor type 3 (913 aa).

The region spanning 29–312 is the FERM domain; that stretch reads VICSIRFLDG…EHHSFFQAKK (284 aa). Residues S357, S359, and S367 each carry the phosphoserine modification. Disordered regions lie at residues 364 to 400 and 417 to 473; these read ETKS…DNLA and KGPL…PDGV. T376 carries the phosphothreonine modification. S381 carries the post-translational modification Phosphoserine. Over residues 382-393 the composition is skewed to basic residues; sequence PRLRHEIRKPRH. S425 is subject to Phosphoserine. Polar residues predominate over residues 441–453; the sequence is SENNPAQSCLTQK. The span at 454–470 shows a compositional bias: low complexity; it reads SSSSVSPSSNAPGSCSP. The PDZ domain occupies 510-582; it reads LIRITPDEEG…DQVVMFIKAS (73 aa). Residues 646 to 901 form the Tyrosine-protein phosphatase domain; that stretch reads VLIQFEQLYR…KFVCEAILRV (256 aa). Substrate-binding positions include D811, 842–848, and Q886; that span reads CSAGIGR. The active-site Phosphocysteine intermediate is C842.

This sequence belongs to the protein-tyrosine phosphatase family. Non-receptor class subfamily.

It localises to the cell membrane. It is found in the cytoplasm. Its subcellular location is the cytoskeleton. It carries out the reaction O-phospho-L-tyrosyl-[protein] + H2O = L-tyrosyl-[protein] + phosphate. Its function is as follows. May act at junctions between the membrane and the cytoskeleton. This is Tyrosine-protein phosphatase non-receptor type 3 (Ptpn3) from Mus musculus (Mouse).